A 431-amino-acid polypeptide reads, in one-letter code: Gamma-glutamyl phosphate reductase (431 aa).

The protein belongs to the gamma-glutamyl phosphate reductase family.

Its subcellular location is the cytoplasm. The enzyme catalyses L-glutamate 5-semialdehyde + phosphate + NADP(+) = L-glutamyl 5-phosphate + NADPH + H(+). It functions in the pathway amino-acid biosynthesis; L-proline biosynthesis; L-glutamate 5-semialdehyde from L-glutamate: step 2/2. Catalyzes the NADPH-dependent reduction of L-glutamate 5-phosphate into L-glutamate 5-semialdehyde and phosphate. The product spontaneously undergoes cyclization to form 1-pyrroline-5-carboxylate. The protein is Gamma-glutamyl phosphate reductase of Beijerinckia indica subsp. indica (strain ATCC 9039 / DSM 1715 / NCIMB 8712).